A 568-amino-acid chain; its full sequence is AP2-like ethylene-responsive transcription factor PLT2 (568 aa).

Low complexity predominate over residues 151–171 (ASPAETSADNSSSTTNTSGGA). The interval 151-173 (ASPAETSADNSSSTTNTSGGAIV) is disordered. DNA-binding regions (AP2/ERF) lie at residues 190–256 (IYRG…TNFP) and 292–350 (MYRG…TNFE). Residues 548-568 (WNSGESAQGSNPGGVFTMWNE) form a disordered region.

This sequence belongs to the AP2/ERF transcription factor family. AP2 subfamily. Stabilized in root meristems by reactive oxygen species (ROS) mediated oxidative post-translational modification triggered by RGF1 hormone peptide in a RITF1-dependent manner. As to expression, expressed in roots, seedlings, flowers, and siliques. Also detected at low levels in leaves. In roots, specifically detected in the distal root meristem, including the QC. This tissue specificity is regulated by auxin gradient and depends on PIN proteins.

The protein resides in the nucleus. Its function is as follows. Probably acts as a transcriptional activator. Binds to the GCC-box pathogenesis-related promoter element. May be involved in the regulation of gene expression by stress factors and by components of stress signal transduction pathways. Master regulator of basal/root fate. Essential for root quiescent center (QC) and columella specification, stem cell activity, as well as for establishment of the stem cell niche during embryogenesis. Modulates the root polar auxin transport by regulating the distribution of PIN genes. Essential role in respecifying pattern and polarity in damaged roots. Direct target of the transcriptional corepressor TPL. Expression levels and patterns regulated post-transcriptionally by root meristem growth factors (RGFs). The protein is AP2-like ethylene-responsive transcription factor PLT2 of Arabidopsis thaliana (Mouse-ear cress).